The chain runs to 396 residues: Mannonate dehydratase (396 aa).

Belongs to the mannonate dehydratase family. Requires Fe(2+) as cofactor. Mn(2+) is required as a cofactor.

The catalysed reaction is D-mannonate = 2-dehydro-3-deoxy-D-gluconate + H2O. Its pathway is carbohydrate metabolism; pentose and glucuronate interconversion. Its function is as follows. Catalyzes the dehydration of D-mannonate. The polypeptide is Mannonate dehydratase (Yersinia enterocolitica serotype O:8 / biotype 1B (strain NCTC 13174 / 8081)).